The sequence spans 4076 residues: E3 ubiquitin-protein ligase TOM1-like (4076 aa).

Low complexity predominate over residues 225-237 (SSAAPAVSAGSTA). Disordered regions lie at residues 225-256 (SSAA…KNVA), 288-360 (YPDT…RDGP), 748-819 (IPAE…ILPS), 921-970 (LEAP…NKPA), 1083-1103 (SPVQ…SSGT), 1571-1646 (MALD…ITRE), 1988-2041 (PADA…KRPI), 2067-2110 (NVPA…KLAK), 2275-2295 (EGDK…IGRS), 2356-2551 (SGTA…ELDY), 2581-2634 (GDDL…LLAP), 2782-2817 (IPIP…ESTH), 2858-2955 (EKAR…QAED), 3037-3066 (EQHE…ASIL), 3105-3132 (RQLH…GAGT), 3216-3241 (KQLK…NNNG), and 3353-3444 (EEQA…QLTP). The span at 238 to 250 (KAKDKEKEKEKAT) shows a compositional bias: basic and acidic residues. Residues 311 to 320 (TTSSPAAPTP) are compositionally biased toward low complexity. Polar residues predominate over residues 322–343 (RRSSTMNVSQSSRTQRVGSSEE). Over residues 767-778 (EGNDADDDSEDD) the composition is skewed to acidic residues. Basic and acidic residues predominate over residues 940-950 (VKGKGKEKATD). The segment covering 959 to 969 (ASSSSSGNNKP) has biased composition (polar residues). A compositionally biased stretch (polar residues) spans 1606–1620 (PGTSRETNVGASTTA). Low complexity predominate over residues 1621–1632 (PQQLPVLPSQQP). Residues 1633–1642 (ATESQSNTPR) show a composition bias toward polar residues. The span at 2021-2041 (VTDKDMHDAPKNPAQDLKRPI) shows a compositional bias: basic and acidic residues. A compositionally biased stretch (polar residues) spans 2086 to 2096 (NEATPSPSGDE). Residues 2099–2110 (SESKEKEKKLAK) show a composition bias toward basic and acidic residues. Composition is skewed to acidic residues over residues 2378–2387 (DLTDDREETP) and 2405–2450 (EFSD…DLGE). Positions 2460–2469 (QPGVVEVLMG) are enriched in low complexity. 2 stretches are compositionally biased toward acidic residues: residues 2470–2516 (ENDD…DLED) and 2523–2551 (EEGN…ELDY). Basic and acidic residues predominate over residues 2587–2597 (EPIRDFDGHYI). Residues 2598–2622 (DDDEDGEEDDDEDEGEDDMDDDMYF) are compositionally biased toward acidic residues. Basic and acidic residues-rich tracts occupy residues 2788-2803 (HSRE…DTYQ) and 2858-2912 (EKAR…ERAE). Positions 2851–2929 (AIQAEKEEKA…QAAADQEANA (79 aa)) form a coiled coil. A compositionally biased stretch (low complexity) spans 2913 to 2927 (AAAQAAAQAAADQEA). Positions 3037-3047 (EQHEQRRRERQ) are enriched in basic and acidic residues. Over residues 3108-3117 (HAQQGGQAAS) the composition is skewed to polar residues. Positions 3341–3375 (PLQAIERRRKEAEEQAKKKKEAEEKAATEREAANA) form a coiled coil. Positions 3353 to 3372 (EEQAKKKKEAEEKAATEREA) are enriched in basic and acidic residues. Over residues 3373–3414 (ANAPEEQASTSTEQTPAQQEATQQPSESTPAAASGQQPAQQD) the composition is skewed to low complexity. Residues 3415–3439 (QENKELEAPKEKADEKDVQSDEKKI) show a composition bias toward basic and acidic residues. The HECT domain maps to 3740-4076 (KADELKFGKL…TAGSDYFGFA (337 aa)). The Glycyl thioester intermediate role is filled by C4043.

Belongs to the UPL family. TOM1/PTR1 subfamily.

The protein localises to the nucleus. The enzyme catalyses S-ubiquitinyl-[E2 ubiquitin-conjugating enzyme]-L-cysteine + [acceptor protein]-L-lysine = [E2 ubiquitin-conjugating enzyme]-L-cysteine + N(6)-ubiquitinyl-[acceptor protein]-L-lysine.. It functions in the pathway protein modification; protein ubiquitination. Probable ubiquitin ligase protein, which may be involved in mRNA export. E3 ubiquitin ligase proteins mediate ubiquitination and subsequent proteasomal degradation of target proteins. Participates in mRNA export from the nucleus by regulating the transport of hnRNP proteins. The sequence is that of E3 ubiquitin-protein ligase TOM1-like from Neurospora crassa (strain ATCC 24698 / 74-OR23-1A / CBS 708.71 / DSM 1257 / FGSC 987).